The following is a 687-amino-acid chain: Putative mitochondrial carnitine O-acetyltransferase (687 aa).

Residue histidine 346 is the Proton acceptor of the active site. 446–459 contacts CoA; that stretch reads GASHIKTVFKCSPD. (R)-carnitine contacts are provided by tyrosine 481 and threonine 494. Serine 517 carries the post-translational modification Phosphoserine.

This sequence belongs to the carnitine/choline acetyltransferase family.

It is found in the mitochondrion inner membrane. It catalyses the reaction (R)-carnitine + acetyl-CoA = O-acetyl-(R)-carnitine + CoA. Its function is as follows. Involved in the transfer of acetyl-CoA into mitochondria. May also be involved in the metabolism of acetate and of ethanol. In Saccharomyces cerevisiae (strain ATCC 204508 / S288c) (Baker's yeast), this protein is Putative mitochondrial carnitine O-acetyltransferase (YAT1).